The primary structure comprises 364 residues: Probable dual-specificity RNA methyltransferase RlmN (364 aa).

Glu-107 functions as the Proton acceptor in the catalytic mechanism. The 234-residue stretch at 113 to 346 (HEYGNSVCVT…ATIRREQGSD (234 aa)) folds into the Radical SAM core domain. Residues Cys-120 and Cys-351 are joined by a disulfide bond. [4Fe-4S] cluster is bound by residues Cys-127, Cys-131, and Cys-134. Residues 177–178 (GE), Ser-209, 232–234 (SLH), and Asn-308 contribute to the S-adenosyl-L-methionine site. Cys-351 (S-methylcysteine intermediate) is an active-site residue.

The protein belongs to the radical SAM superfamily. RlmN family. It depends on [4Fe-4S] cluster as a cofactor.

The protein localises to the cytoplasm. The enzyme catalyses adenosine(2503) in 23S rRNA + 2 reduced [2Fe-2S]-[ferredoxin] + 2 S-adenosyl-L-methionine = 2-methyladenosine(2503) in 23S rRNA + 5'-deoxyadenosine + L-methionine + 2 oxidized [2Fe-2S]-[ferredoxin] + S-adenosyl-L-homocysteine. The catalysed reaction is adenosine(37) in tRNA + 2 reduced [2Fe-2S]-[ferredoxin] + 2 S-adenosyl-L-methionine = 2-methyladenosine(37) in tRNA + 5'-deoxyadenosine + L-methionine + 2 oxidized [2Fe-2S]-[ferredoxin] + S-adenosyl-L-homocysteine. Specifically methylates position 2 of adenine 2503 in 23S rRNA and position 2 of adenine 37 in tRNAs. Confers resistance to some classes of antibiotics. This Staphylococcus carnosus (strain TM300) protein is Probable dual-specificity RNA methyltransferase RlmN.